Here is a 378-residue protein sequence, read N- to C-terminus: UPF0754 membrane protein BT9727_0767 (378 aa).

A run of 2 helical transmembrane segments spans residues 1 to 21 (MNIW…GGFT) and 357 to 377 (YLGA…LLFL).

It belongs to the UPF0754 family.

Its subcellular location is the cell membrane. The chain is UPF0754 membrane protein BT9727_0767 from Bacillus thuringiensis subsp. konkukian (strain 97-27).